Reading from the N-terminus, the 438-residue chain is Transmembrane protein 184C (438 aa).

7 helical membrane-spanning segments follow: residues 17-37 (LVAV…VWEL), 48-68 (AWFI…WVIL), 86-106 (ILWM…YPGI), 179-199 (YTVV…LGIY), 212-232 (YLVI…LLFY), 254-274 (VVFV…VGVI), and 287-307 (AVAT…AAIA). The interval 358–438 (PRKKLFPEDQ…KEPSDKSVDS (81 aa)) is disordered. Composition is skewed to low complexity over residues 374–390 (SLLS…ASSM) and 404–413 (TVTPQTTPTT). Position 422 is a phosphoserine (serine 422). Basic and acidic residues predominate over residues 425–438 (IGEKKEPSDKSVDS).

The protein belongs to the TMEM184 family.

It localises to the membrane. In terms of biological role, possible tumor suppressor which may play a role in cell growth. This Pongo abelii (Sumatran orangutan) protein is Transmembrane protein 184C (TMEM184C).